A 348-amino-acid chain; its full sequence is UDP-3-O-acylglucosamine N-acyltransferase (348 aa).

His237 acts as the Proton acceptor in catalysis.

The protein belongs to the transferase hexapeptide repeat family. LpxD subfamily. In terms of assembly, homotrimer.

The catalysed reaction is a UDP-3-O-[(3R)-3-hydroxyacyl]-alpha-D-glucosamine + a (3R)-hydroxyacyl-[ACP] = a UDP-2-N,3-O-bis[(3R)-3-hydroxyacyl]-alpha-D-glucosamine + holo-[ACP] + H(+). It participates in bacterial outer membrane biogenesis; LPS lipid A biosynthesis. In terms of biological role, catalyzes the N-acylation of UDP-3-O-acylglucosamine using 3-hydroxyacyl-ACP as the acyl donor. Is involved in the biosynthesis of lipid A, a phosphorylated glycolipid that anchors the lipopolysaccharide to the outer membrane of the cell. In Geotalea daltonii (strain DSM 22248 / JCM 15807 / FRC-32) (Geobacter daltonii), this protein is UDP-3-O-acylglucosamine N-acyltransferase.